The primary structure comprises 211 residues: MGKFEVLDHPLIQHKLTMIRDKNVGTKFFRETVKEISTLMAYEVARDMPLKDVEIETPIAKTTQKELAGKKVAIIPILRAGIGMVDGMTDLIPAAKIGFIGMYRDEETLKPHEYFVKLPNDITERQLFIVDPMLATGGSAMMAIEALKKRGCSEKNMKFACLVAAPEGVKAVRDAYPDVDIYTAGLDDHLNEDGYIVPGLGDAGDRLFGTK.

5-phospho-alpha-D-ribose 1-diphosphate is bound by residues arginine 79, arginine 104, and 131 to 139 (DPMLATGGS). Uracil contacts are provided by residues isoleucine 196 and 201–203 (GDA). Aspartate 202 lines the 5-phospho-alpha-D-ribose 1-diphosphate pocket.

The protein belongs to the UPRTase family. Mg(2+) is required as a cofactor.

It catalyses the reaction UMP + diphosphate = 5-phospho-alpha-D-ribose 1-diphosphate + uracil. Its pathway is pyrimidine metabolism; UMP biosynthesis via salvage pathway; UMP from uracil: step 1/1. With respect to regulation, allosterically activated by GTP. Functionally, catalyzes the conversion of uracil and 5-phospho-alpha-D-ribose 1-diphosphate (PRPP) to UMP and diphosphate. The chain is Uracil phosphoribosyltransferase from Limosilactobacillus reuteri (strain DSM 20016) (Lactobacillus reuteri).